We begin with the raw amino-acid sequence, 530 residues long: UDP-glucuronosyltransferase 2A3 (530 aa).

The signal sequence occupies residues 1-23; sequence MAPGKLASAVLLLLLCCAGSGFC. The Extracellular portion of the chain corresponds to 24–494; sequence GKVLVWPCEM…SWFQYHSLDV (471 aa). N-linked (GlcNAc...) asparagine glycosylation is present at Asn-316. A helical membrane pass occupies residues 495–515; sequence IGFLLACVASAILLVTKCCLF. Residues 516–530 are Cytoplasmic-facing; that stretch reads SFQNFIKIGKRIKKE.

The protein belongs to the UDP-glycosyltransferase family. Specifically expressed in liver and small intestine.

It is found in the membrane. The enzyme catalyses glucuronate acceptor + UDP-alpha-D-glucuronate = acceptor beta-D-glucuronoside + UDP + H(+). Functionally, UDP-glucuronosyltransferases catalyze phase II biotransformation reactions in which lipophilic substrates are conjugated with glucuronic acid to increase water solubility and enhance excretion. They are of major importance in the conjugation and subsequent elimination of potentially toxic xenobiotics and endogenous compounds. The chain is UDP-glucuronosyltransferase 2A3 (UGT2A3) from Cavia porcellus (Guinea pig).